Consider the following 78-residue polypeptide: Large ribosomal subunit protein bL28 (78 aa).

The segment at methionine 1 to histidine 20 is disordered.

The protein belongs to the bacterial ribosomal protein bL28 family.

The polypeptide is Large ribosomal subunit protein bL28 (Actinobacillus pleuropneumoniae serotype 7 (strain AP76)).